The primary structure comprises 632 residues: Probable potassium transport system protein Kup (632 aa).

12 helical membrane passes run 19-39 (LLCLAALGVVYGDIGTSPLYV), 57-77 (VIGIISLIFWTIMIVVSLKYV), 111-131 (ILFLIGAFGAALFFGDGVITP), 147-167 (PLLQPYVLPITVVVLIALFML), 175-195 (IGALFGPVMVIWFVSLGLVGL), 213-233 (AFAFCISNGWLAFIALGAVVL), 257-277 (WYGGVLPALTLNYLGQGALLL), 286-306 (PFFLLFPSWALYGAVGLATAA), 347-367 (IYIPFVNWTLLSVVLMAVLGF), 376-396 (AYGVAVTTTMVIETTLTFFVL), 404-424 (FLLGILVTAFFLAIDSAFFSA), and 429-449 (VAQGGWFPLVIGSVIFFIMIT).

Belongs to the HAK/KUP transporter (TC 2.A.72) family.

Its subcellular location is the cell inner membrane. The enzyme catalyses K(+)(in) + H(+)(in) = K(+)(out) + H(+)(out). In terms of biological role, transport of potassium into the cell. Likely operates as a K(+):H(+) symporter. In Nitrosospira multiformis (strain ATCC 25196 / NCIMB 11849 / C 71), this protein is Probable potassium transport system protein Kup.